The following is a 714-amino-acid chain: FERM domain-containing protein 7 (714 aa).

In terms of domain architecture, FERM spans 2–282 (LHLKVQFLDD…EYHAFFRLSE (281 aa)). Residues 537 to 558 (NIRMKSFQQDLQVLQEAIARTS) are a coiled coil.

In terms of tissue distribution, expressed in liver, kidney, pancreas and at low levels in brain and heart. Expressed in embryonic brain and developing neural retina.

The protein localises to the cell projection. The protein resides in the neuron projection. It is found in the growth cone. Plays a role in neurite development, may be through the activation of the GTPase RAC1. Plays a role in the control of eye movement and gaze stability. This is FERM domain-containing protein 7 (FRMD7) from Homo sapiens (Human).